Here is a 1264-residue protein sequence, read N- to C-terminus: Protein fantom (1264 aa).

Coiled-coil stretches lie at residues leucine 64 to glutamine 143, tyrosine 196 to threonine 268, leucine 299 to isoleucine 454, and asparagine 488 to leucine 555. C2 domains lie at lysine 577–threonine 714 and alanine 773–phenylalanine 897. 2 disordered regions span residues aspartate 979–lysine 1018 and glutamine 1047–glutamine 1093. Over residues serine 1056–aspartate 1080 the composition is skewed to acidic residues.

Belongs to the RPGRIP1 family. Interacts with NPHP4 and NPHP1; NPHP1, NPHP4 and RPGRIP1L are proposed to form a functional NPHP1-4-8 module localized to cell-cell contacts and the ciliary transition zone; NPHP4 mediates the interaction between NPHP1 and RPGRIP1L. Interacts with IQCB1; the interaction likely requires additional interactors. Interacts with TBXA2R (via C-terminus), RPGR, NEK4. Interacts with NPHP4, INVS and DVL2; proposed to form a complex involved in DVL2 stabilization. Interacts with PSMD2. In terms of tissue distribution, ubiquitously expressed. Not found in heart and skin.

The protein resides in the cytoplasm. Its subcellular location is the cytoskeleton. It localises to the cilium basal body. It is found in the cilium axoneme. The protein localises to the microtubule organizing center. The protein resides in the centrosome. Its subcellular location is the cell junction. It localises to the tight junction. Negatively regulates signaling through the G-protein coupled thromboxane A2 receptor (TBXA2R). May be involved in mechanisms like programmed cell death, craniofacial development, patterning of the limbs, and formation of the left-right axis. Involved in the organization of apical junctions; the function is proposed to implicate a NPHP1-4-8 module. Does not seem to be strictly required for ciliogenesis. Involved in establishment of planar cell polarity such as in cochlear sensory epithelium and is proposed to implicate stabilization of disheveled proteins. Involved in regulation of proteasomal activity at the primary cilium probably implicating association with PSDM2. The protein is Protein fantom (Rpgrip1l) of Mus musculus (Mouse).